The following is a 1541-amino-acid chain: Multiple epidermal growth factor-like domains protein 6 (1541 aa).

The signal sequence occupies residues 1–30 (MSFLEEARAAGRAVVLALVLLLLPAVPVGA). The EMI domain maps to 44-125 (MPHVCAEQEL…QQPDEEGCLS (82 aa)). 15 disulfide bridges follow: Cys-48–Cys-111, Cys-77–Cys-83, Cys-110–Cys-123, Cys-128–Cys-139, Cys-133–Cys-147, Cys-149–Cys-158, Cys-165–Cys-176, Cys-172–Cys-185, Cys-187–Cys-200, Cys-242–Cys-255, Cys-248–Cys-268, Cys-270–Cys-283, Cys-289–Cys-300, Cys-296–Cys-309, and Cys-311–Cys-324. Residues 124–159 (LSAECSASLCFHGGRCVPGSAQPCHCPPGFQGPRCQ) form the EGF-like 1 domain. An EGF-like 2; calcium-binding domain is found at 161 to 201 (DVDECRTHNGGCQHRCVNTPGSYLCECKPGFRLHTDSRTCL). EGF-like domains are found at residues 206 to 242 (CALGNGGCQHHCVQLTITRHRCQCRPGFQLQEDGRHC) and 238 to 284 (DGRH…KACE). Asn-252 carries an N-linked (GlcNAc...) asparagine glycan. In terms of domain architecture, EGF-like 5; calcium-binding spans 285-325 (DVDECAAGLAQCAHGCLNTQGSFKCVCHAGYELGADGRQCY). EGF-like domains follow at residues 335-370 (CEANNGGCSHGCSHTSAGPLCTCPRGYELDTDQRTC) and 375-411 (DCADSPCCQQVCTNNPGGYECGCYAGYRLSADGCGCE). The EGF-like 8; calcium-binding domain occupies 412-452 (DVDECASSRGGCEHHCTNLAGSFQCSCEAGYRLHEDRRGCS). 12 cysteine pairs are disulfide-bonded: Cys-416–Cys-427, Cys-423–Cys-436, Cys-438–Cys-451, Cys-520–Cys-533, Cys-527–Cys-540, Cys-542–Cys-551, Cys-564–Cys-576, Cys-570–Cys-583, Cys-585–Cys-594, Cys-607–Cys-619, Cys-613–Cys-626, and Cys-628–Cys-637. 19 consecutive EGF-like domains span residues 516 to 552 (FGHDCSLTCDDCRNGGTCLLGLDGCDCPEGWTGLICN), 560 to 595 (FGKNCSFSCSCQNGGTCDSVTGACRCPPGVSGTNCE), 603 to 638 (YGKHCRKKCNCANRGRCHRLYGACLCDPGLYGRFCH), 736 to 770 (FGVNCSSSCSCGGAPCHGVTGQCRCPPGRTGEDCE), 783 to 814 (QEICPACQHAARCDPETGACLCLPGFVGSRCQ), 822 to 857 (YGPSCQTRCSCANDGHCHPATGHCSCAPGWTGFSCQ), 865 to 901 (WGPDCSHPCNCSAGHGSCDAISGLCLCEAGYVGPRCE), 909 to 944 (FGPGCEQRCQCQHGAACDHVSGACTCPAGWRGTFCE), 955 to 987 (DCRSACNCTAGAACDAVNGSCLCPAGRRGPRCA), 995 to 1030 (YGHNCSQACACFNGASCDPVHGQCHCAPGWMGPSCL), 1038 to 1073 (YGDNCRHSCLCQNGGTCDPVSGHCACPEGWAGLACE), 1081 to 1116 (VRAGCRHSGGCLNGGLCDPHTGRCLCPAGWTGDKCQ), 1124 to 1159 (FGEACAQRCSCPPGAACHHVTGACRCPPGFTGSGCE), 1211 to 1246 (YGPGCEQLCGCLNGGSCDAATGACRCPTGFLGTDCN), 1254 to 1289 (FGPNCTHVCGCGQGAACDPVTGTCLCPPGRAGVRCE), 1297 to 1332 (FGVGCEHTCSCRNGGLCHASNGSCSCGLGWTGRHCE), 1345 to 1375 (HLECSCHNNSTCEPATGTCRCGPGFYGQACE), 1383 to 1418 (HGAGCQGLCWCQHGAPCDPISGRCLCPAGFHGHFCE), and 1469 to 1504 (FGPSCTLHCDCGGGADCDPVSGQCHCVDGYMGPTCR). Asn-739 carries N-linked (GlcNAc...) asparagine glycosylation. Intrachain disulfides connect Cys-740/Cys-751, Cys-744/Cys-758, Cys-760/Cys-769, Cys-786/Cys-795, Cys-789/Cys-802, Cys-804/Cys-813, Cys-826/Cys-838, Cys-832/Cys-845, Cys-847/Cys-856, Cys-869/Cys-882, Cys-873/Cys-889, Cys-891/Cys-900, Cys-913/Cys-925, Cys-919/Cys-932, and Cys-934/Cys-943. Intrachain disulfides connect Cys-999–Cys-1011, Cys-1005–Cys-1018, Cys-1020–Cys-1029, Cys-1042–Cys-1054, Cys-1048–Cys-1061, Cys-1063–Cys-1072, Cys-1085–Cys-1097, Cys-1091–Cys-1104, Cys-1106–Cys-1115, Cys-1128–Cys-1140, Cys-1134–Cys-1147, Cys-1149–Cys-1158, Cys-1215–Cys-1227, Cys-1221–Cys-1234, Cys-1236–Cys-1245, Cys-1258–Cys-1270, Cys-1264–Cys-1277, Cys-1279–Cys-1288, Cys-1301–Cys-1313, Cys-1307–Cys-1320, Cys-1322–Cys-1331, Cys-1348–Cys-1356, Cys-1350–Cys-1363, Cys-1365–Cys-1374, Cys-1387–Cys-1399, Cys-1393–Cys-1406, Cys-1408–Cys-1417, Cys-1473–Cys-1485, Cys-1479–Cys-1492, and Cys-1494–Cys-1503. The interval 1509 to 1541 (LRLPENPSLAQGSAGTLPASSRPTSRSGGPARH) is disordered. Polar residues predominate over residues 1516-1535 (SLAQGSAGTLPASSRPTSRS).

It localises to the secreted. The protein is Multiple epidermal growth factor-like domains protein 6 (MEGF6) of Homo sapiens (Human).